Reading from the N-terminus, the 29-residue chain is Chassatide C1 (29 aa).

Residues 1–29 (GDACGETCFTGICFTAGCSCNPWPTCTRN) constitute a cross-link (cyclopeptide (Gly-Asn)). Intrachain disulfides connect Cys4–Cys18, Cys8–Cys20, and Cys13–Cys26.

In terms of processing, this is a cyclic peptide. As to expression, expressed in leaf, fruit, pedical and stem but not in root (at protein level).

In terms of biological role, probably participates in a plant defense mechanism. This is Chassatide C1 from Chassalia chartacea (Chassalia curviflora).